The primary structure comprises 384 residues: MSGSLMNLFSLCFKPFGHVCDNSEAGSGGGGGVSGGTGGEGKDGLLWFRDLGKYCGGDFSMAVIQANQVLEDQSQVESGNFGTFVGVYDGHGGPEAARYVCDHLFNHFREISAETQGVVTRETIERAFHATEEGFASIVSELWQEIPNLATVGTCCLVGVIYQNTLFVASLGDSRVVLGKKGNCGGLSAIQLSTEHNANNEDIRWELKDLHPDDPQIVVFRHGVWRVKGIIQVSRSIGDMYMKRPEFNKEPISQKFRIAEPMKRPLMSATPTILSHPLHPNDSFLIFASDGLWEHLTNEKAVEIVHNHPRAGSAKRLIKAALHEAARKREMRYSDLRKIDKKVRRHFHDDITVIVVFLNHDLISRGHINSTQDTTVSIRSALEH.

In terms of domain architecture, PPM-type phosphatase spans aspartate 58 to leucine 358. The Mn(2+) site is built by aspartate 89, glycine 90, aspartate 290, and aspartate 349.

This sequence belongs to the PP2C family. Mg(2+) is required as a cofactor. The cofactor is Mn(2+).

It catalyses the reaction O-phospho-L-seryl-[protein] + H2O = L-seryl-[protein] + phosphate. The enzyme catalyses O-phospho-L-threonyl-[protein] + H2O = L-threonyl-[protein] + phosphate. Functionally, dephosphorylates and represses plasma membrane H(+)-ATPases (PM H(+)-ATPases, e.g. AHA1 and AHA2), thus influencing negatively plant growth and fitness. Promotes the apical hook maintenance of etiolated seedlings. The polypeptide is Probable protein phosphatase 2C 42 (Arabidopsis thaliana (Mouse-ear cress)).